The sequence spans 518 residues: 2-isopropylmalate synthase (518 aa).

Residues 4-266 enclose the Pyruvate carboxyltransferase domain; sequence INFFDTTLRD…ESTIQLNEIK (263 aa). Mn(2+) contacts are provided by Asp-13, His-201, His-203, and Asn-237. The segment at 391-518 is regulatory domain; the sequence is DFISLQVHYG…GLSKQAAVGS (128 aa).

This sequence belongs to the alpha-IPM synthase/homocitrate synthase family. LeuA type 1 subfamily. In terms of assembly, homodimer. Requires Mn(2+) as cofactor.

It is found in the cytoplasm. The catalysed reaction is 3-methyl-2-oxobutanoate + acetyl-CoA + H2O = (2S)-2-isopropylmalate + CoA + H(+). The protein operates within amino-acid biosynthesis; L-leucine biosynthesis; L-leucine from 3-methyl-2-oxobutanoate: step 1/4. Catalyzes the condensation of the acetyl group of acetyl-CoA with 3-methyl-2-oxobutanoate (2-ketoisovalerate) to form 3-carboxy-3-hydroxy-4-methylpentanoate (2-isopropylmalate). The polypeptide is 2-isopropylmalate synthase (Bacillus licheniformis (strain ATCC 14580 / DSM 13 / JCM 2505 / CCUG 7422 / NBRC 12200 / NCIMB 9375 / NCTC 10341 / NRRL NRS-1264 / Gibson 46)).